We begin with the raw amino-acid sequence, 462 residues long: Myo-inositol transporter 3B (462 aa).

Transmembrane regions (helical) follow at residues 1–21 (MAIL…ASSY), 31–51 (IILG…ITET), 61–81 (IGVN…IGAG), 91–111 (LLFA…HYLP), 194–214 (LCGF…LGLS), 218–238 (LGGL…MSLV), 245–265 (GLML…IIGF), 289–309 (VVIG…SHLV), 324–344 (GSGV…VSYL), and 354–374 (GTYG…VFCF).

The protein belongs to the major facilitator superfamily. Sugar transporter (TC 2.A.1.1) family.

Its subcellular location is the cell membrane. It carries out the reaction myo-inositol(out) + H(+)(out) = myo-inositol(in) + H(+)(in). Its function is as follows. Transporter for myo-inositol. This is Myo-inositol transporter 3B from Cryptococcus neoformans var. grubii serotype A (strain H99 / ATCC 208821 / CBS 10515 / FGSC 9487) (Filobasidiella neoformans var. grubii).